Consider the following 527-residue polypeptide: AAA ATPase forming ring-shaped complexes (527 aa).

Residues 1–18 (MVTMSSPTDSSPSNSFSD) are compositionally biased toward low complexity. Positions 1-38 (MVTMSSPTDSSPSNSFSDFNREEQSRLSDEVRQLKRTN) are disordered. The span at 19–33 (FNREEQSRLSDEVRQ) shows a compositional bias: basic and acidic residues. Residues 21–53 (REEQSRLSDEVRQLKRTNSDLGARNAKLAEMLK) adopt a coiled-coil conformation. Residue 257–262 (GCGKTL) coordinates ATP. The segment at 492 to 515 (DENQQSEDLPNTSNPDEWSRITGR) is disordered. Polar residues predominate over residues 497-507 (SEDLPNTSNPD).

Belongs to the AAA ATPase family. In terms of assembly, homohexamer. Assembles into a hexameric ring structure.

The protein is AAA ATPase forming ring-shaped complexes of Corynebacterium glutamicum (strain R).